The following is a 417-amino-acid chain: Delta-aminolevulinic acid dehydratase, chloroplastic (417 aa).

A chloroplast-targeting transit peptide spans 1–40; that stretch reads MAALLVPGGGAAPGLVWRRRRAAVQCAAASPSSPDPSWRT. The tract at residues 63–92 is disordered; that stretch reads VVSGNPPAAPAAPAKAKAPPGTPVVKPLRL. Lys-286 acts as the Schiff-base intermediate with substrate in catalysis. 5-aminolevulinate-binding residues include Arg-296 and Lys-308. Glu-324 is a Mg(2+) binding site. Lys-339 serves as the catalytic Schiff-base intermediate with substrate. 5-aminolevulinate contacts are provided by Ser-365 and Tyr-404.

It belongs to the ALAD family. In terms of assembly, homooctamer. It depends on Mg(2+) as a cofactor.

It localises to the plastid. The protein resides in the chloroplast. The catalysed reaction is 2 5-aminolevulinate = porphobilinogen + 2 H2O + H(+). It participates in porphyrin-containing compound metabolism; protoporphyrin-IX biosynthesis; coproporphyrinogen-III from 5-aminolevulinate: step 1/4. Catalyzes an early step in the biosynthesis of tetrapyrroles. Binds two molecules of 5-aminolevulinate per subunit, each at a distinct site, and catalyzes their condensation to form porphobilinogen. The protein is Delta-aminolevulinic acid dehydratase, chloroplastic (HEMB) of Selaginella martensii (Martens's spike moss).